We begin with the raw amino-acid sequence, 246 residues long: tRNA pseudouridine synthase A (246 aa).

Aspartate 52 functions as the Nucleophile in the catalytic mechanism. Tyrosine 111 lines the substrate pocket.

Belongs to the tRNA pseudouridine synthase TruA family. Homodimer.

It carries out the reaction uridine(38/39/40) in tRNA = pseudouridine(38/39/40) in tRNA. Formation of pseudouridine at positions 38, 39 and 40 in the anticodon stem and loop of transfer RNAs. The polypeptide is tRNA pseudouridine synthase A (Rhodopseudomonas palustris (strain BisA53)).